The chain runs to 161 residues: Regulator of ribonuclease activity A (161 aa).

The protein belongs to the RraA family. In terms of assembly, homotrimer. Binds to both RNA-binding sites in the C-terminal region of Rne and to RhlB.

It is found in the cytoplasm. In terms of biological role, globally modulates RNA abundance by binding to RNase E (Rne) and regulating its endonucleolytic activity. Can modulate Rne action in a substrate-dependent manner by altering the composition of the degradosome. Modulates RNA-binding and helicase activities of the degradosome. The sequence is that of Regulator of ribonuclease activity A from Citrobacter koseri (strain ATCC BAA-895 / CDC 4225-83 / SGSC4696).